A 193-amino-acid chain; its full sequence is Peptide deformylase (193 aa).

Residues Cys-111 and His-155 each coordinate Fe cation. Glu-156 is a catalytic residue. His-159 is a Fe cation binding site.

Belongs to the polypeptide deformylase family. The cofactor is Fe(2+).

It catalyses the reaction N-terminal N-formyl-L-methionyl-[peptide] + H2O = N-terminal L-methionyl-[peptide] + formate. Its function is as follows. Removes the formyl group from the N-terminal Met of newly synthesized proteins. Requires at least a dipeptide for an efficient rate of reaction. N-terminal L-methionine is a prerequisite for activity but the enzyme has broad specificity at other positions. The chain is Peptide deformylase from Mycoplasma genitalium (strain ATCC 33530 / DSM 19775 / NCTC 10195 / G37) (Mycoplasmoides genitalium).